A 251-amino-acid polypeptide reads, in one-letter code: Probable transcriptional regulatory protein MSMEG_2940/MSMEI_2866 (251 aa).

This sequence belongs to the TACO1 family.

Its subcellular location is the cytoplasm. The chain is Probable transcriptional regulatory protein MSMEG_2940/MSMEI_2866 from Mycolicibacterium smegmatis (strain ATCC 700084 / mc(2)155) (Mycobacterium smegmatis).